The chain runs to 131 residues: Small ribosomal subunit protein uS8 (131 aa).

The protein belongs to the universal ribosomal protein uS8 family. Part of the 30S ribosomal subunit. Contacts proteins S5 and S12.

One of the primary rRNA binding proteins, it binds directly to 16S rRNA central domain where it helps coordinate assembly of the platform of the 30S subunit. The sequence is that of Small ribosomal subunit protein uS8 from Mesomycoplasma hyopneumoniae (strain 7448) (Mycoplasma hyopneumoniae).